Consider the following 270-residue polypeptide: ATP synthase subunit a (270 aa).

The next 5 helical transmembrane spans lie at 37-57 (NVHI…LWVF), 98-118 (VAPL…MDLI), 143-163 (DVNI…YYSI), 217-237 (VVFI…GALP), and 239-259 (AIFH…LTIV).

This sequence belongs to the ATPase A chain family. F-type ATPases have 2 components, CF(1) - the catalytic core - and CF(0) - the membrane proton channel. CF(1) has five subunits: alpha(3), beta(3), gamma(1), delta(1), epsilon(1). CF(0) has three main subunits: a(1), b(2) and c(9-12). The alpha and beta chains form an alternating ring which encloses part of the gamma chain. CF(1) is attached to CF(0) by a central stalk formed by the gamma and epsilon chains, while a peripheral stalk is formed by the delta and b chains.

The protein resides in the cell inner membrane. In terms of biological role, key component of the proton channel; it plays a direct role in the translocation of protons across the membrane. In Aliivibrio salmonicida (strain LFI1238) (Vibrio salmonicida (strain LFI1238)), this protein is ATP synthase subunit a.